Here is a 1275-residue protein sequence, read N- to C-terminus: Inner capsid protein lambda-1 (1275 aa).

The segment covering 1 to 12 (MKRIPRKTRGKS) has biased composition (basic residues). The disordered stretch occupies residues 1-147 (MKRIPRKTRG…NVDNEGGDNQ (147 aa)). Residues 18–35 (DSTERADDGSAQLRDKQS) show a composition bias toward basic and acidic residues. Positions 55–66 (TRPSLQTVQKAT) are enriched in polar residues. Basic and acidic residues-rich tracts occupy residues 80–98 (AVDK…HVEA) and 105–117 (ATKR…DKQK). The segment covering 118–139 (AQVTYNDTGINNANELSRSGNV) has biased composition (polar residues). A C2H2-type zinc finger spans residues 181 to 203 (YQCHVCSAVLFSPLDLDAHVASH).

Belongs to the turreted BTV-fold inner capsid family. As to quaternary structure, homodecamer; each decamer is made up of two conformers of VP2, called VP2A and VP2B. 12 homodecamers assemble to form an icosahedral capsid. Interacts with protein mu-NS; in viral inclusions. Requires Mg(2+) as cofactor. It depends on Mn(2+) as a cofactor.

The protein resides in the virion. It carries out the reaction ATP + H2O = ADP + phosphate + H(+). In terms of biological role, inner capsid protein that self-assembles to form an icosahedral capsid with a T=2 symmetry, which consists of 120 copies of VP2, with channels at each of its five-fold vertices. This capsid constitutes the innermost concentric layer of the viral mature particle. Displays NTPase, RNA 5'-triphosphatase (RTPase) and RNA helicase activities and probably participates in transcription of the viral genome. Helicase activity might be involved in unwinding or reannealing dsRNA during RNA synthesis. RTPase enzymatic activity represents the first step in RNA capping, which yields a 5'-diphosphorylated plus-strand RNA. The protein is Inner capsid protein lambda-1 of Reovirus type 2 (strain D5/Jones) (T2J).